The sequence spans 318 residues: Annexin D6 (318 aa).

The residue at position 2 (A2) is an N-acetylalanine. 4 Annexin repeats span residues 11-82 (PLPE…LWTL), 83-154 (DPTE…PLVS), 168-239 (KLAR…TAIK), and 243-314 (YPEK…ALLG). 4 residues coordinate Ca(2+): F24, G26, G28, and E68. S95 is modified (phosphoserine). Residues T100 and T112 each carry the phosphothreonine modification. Phosphotyrosine is present on Y129. The Ca(2+) site is built by I256, R258, and G260. A Phosphotyrosine modification is found at Y285. At S290 the chain carries Phosphoserine. Positions 300 and 301 each coordinate Ca(2+).

This sequence belongs to the annexin (TC 1.A.31.1) family. Expressed in flowers.

In Arabidopsis thaliana (Mouse-ear cress), this protein is Annexin D6 (ANN6).